The sequence spans 113 residues: MRHYEIVFMVHPDQSEQVTGMIERYTGSITEAGGVIHRLEDWGRRQLAYPINKLHKAHYVLMNVEAPTEVISELETTFRYNDAVLRNLVMRTKNAVTEASPLVREEKKEAPAA.

The protein belongs to the bacterial ribosomal protein bS6 family.

Binds together with bS18 to 16S ribosomal RNA. In Pseudoalteromonas translucida (strain TAC 125), this protein is Small ribosomal subunit protein bS6.